A 603-amino-acid chain; its full sequence is Probable methyltransferase-like protein 25 (603 aa).

A disordered region spans residues 326–352; it reads TSSQQIPNRETSEANKERRKMTSKSSE.

Probable methyltransferase. This chain is Probable methyltransferase-like protein 25 (METTL25), found in Homo sapiens (Human).